A 206-amino-acid polypeptide reads, in one-letter code: Guanylate kinase (206 aa).

Residues 5–183 (FNLLILSGPS…SKEIILSIAK (179 aa)) enclose the Guanylate kinase-like domain. Residue 12–19 (GPSGAGKS) participates in ATP binding.

The protein belongs to the guanylate kinase family.

It is found in the cytoplasm. The enzyme catalyses GMP + ATP = GDP + ADP. Essential for recycling GMP and indirectly, cGMP. The chain is Guanylate kinase (gmk) from Helicobacter pylori (strain ATCC 700392 / 26695) (Campylobacter pylori).